Consider the following 356-residue polypeptide: V-type proton ATPase subunit d (356 aa).

It belongs to the V-ATPase V0D/AC39 subunit family. As to quaternary structure, V-ATPase is a heteromultimeric enzyme composed of a peripheral catalytic V1 complex (components A to H) attached to an integral membrane V0 proton pore complex (components: a, c, c', c'' and d).

Subunit of the integral membrane V0 complex of vacuolar ATPase. Vacuolar ATPase is responsible for acidifying a variety of intracellular compartments in eukaryotic cells, thus providing most of the energy required for transport processes in the vacuolar system. The sequence is that of V-type proton ATPase subunit d (vatD-1) from Dictyostelium discoideum (Social amoeba).